A 471-amino-acid polypeptide reads, in one-letter code: Adenosylhomocysteinase (471 aa).

Substrate-binding residues include T60, D135, and E196. T197–T199 is an NAD(+) binding site. Substrate-binding residues include K226 and D230. Residues N231, G260–G265, E283, N318, I339–H341, and N387 contribute to the NAD(+) site.

Belongs to the adenosylhomocysteinase family. NAD(+) serves as cofactor.

The protein resides in the cytoplasm. It catalyses the reaction S-adenosyl-L-homocysteine + H2O = L-homocysteine + adenosine. It functions in the pathway amino-acid biosynthesis; L-homocysteine biosynthesis; L-homocysteine from S-adenosyl-L-homocysteine: step 1/1. Functionally, may play a key role in the regulation of the intracellular concentration of adenosylhomocysteine. The chain is Adenosylhomocysteinase from Chlorobaculum parvum (strain DSM 263 / NCIMB 8327) (Chlorobium vibrioforme subsp. thiosulfatophilum).